A 228-amino-acid polypeptide reads, in one-letter code: Orotate phosphoribosyltransferase (228 aa).

Lys26 serves as a coordination point for 5-phospho-alpha-D-ribose 1-diphosphate. Position 34-35 (Phe34–Phe35) interacts with orotate. 5-phospho-alpha-D-ribose 1-diphosphate-binding positions include Tyr72–Lys73, Arg98, Lys99, Lys102, His104, and Asp123–Ser131. Orotate-binding residues include Ser127 and Arg155.

It belongs to the purine/pyrimidine phosphoribosyltransferase family. PyrE subfamily. In terms of assembly, homodimer. The cofactor is Mg(2+).

The enzyme catalyses orotidine 5'-phosphate + diphosphate = orotate + 5-phospho-alpha-D-ribose 1-diphosphate. Its pathway is pyrimidine metabolism; UMP biosynthesis via de novo pathway; UMP from orotate: step 1/2. Its function is as follows. Catalyzes the transfer of a ribosyl phosphate group from 5-phosphoribose 1-diphosphate to orotate, leading to the formation of orotidine monophosphate (OMP). This Nitrosospira multiformis (strain ATCC 25196 / NCIMB 11849 / C 71) protein is Orotate phosphoribosyltransferase.